A 27-amino-acid chain; its full sequence is Potassium channel toxin alpha-KTx 32.1 (27 aa).

Cystine bridges form between cysteine 5–cysteine 18 and cysteine 12–cysteine 25.

Expressed by the venom gland.

The protein localises to the secreted. Functionally, blocker of voltage-gated potassium channels. Inhibits voltage-gated potassium channels Kv1.2/KCNA2 (Kd=0.96 nM) and Kv1.3/KCNA3 (Kd=1.3 nM). Does not inhibit Kv1.1/KCNA1, Kv1.5/KCNA5, Kv11.1/KCNH2/ERG1, KCa1.1/KCNMA1, KCa3.1/KCNN4, NaV1.5/SCN5A, NaV1.4/SCN4A or HV1/HVCN1. Strongly inhibits the expression of the activation markers interleukin-2 receptor and CD40 ligand/CD40LG in anti-CD3-activated CD4(+) TEM lymphocytes. This is Potassium channel toxin alpha-KTx 32.1 from Centruroides margaritatus (Central American bark Scorpion).